We begin with the raw amino-acid sequence, 163 residues long: MLNHFNFKLKRDVTIIVPGEAFVSNKRVISTILGSCVAVVLCDESNNLIGMNHYVLVRSDLDISPDQRGRYGIYAIPMLINAMLENGANKSNLKAKLFGGTNFMAKGSVKVGLENSEFAVHTLNKYRIPILAKDFDQSKSRKIFAFPENFKVIVEYPDGTKVF.

It belongs to the CheD family.

It carries out the reaction L-glutaminyl-[protein] + H2O = L-glutamyl-[protein] + NH4(+). In terms of biological role, probably deamidates glutamine residues to glutamate on methyl-accepting chemotaxis receptors (MCPs), playing an important role in chemotaxis. The chain is Probable chemoreceptor glutamine deamidase CheD from Borrelia garinii subsp. bavariensis (strain ATCC BAA-2496 / DSM 23469 / PBi) (Borreliella bavariensis).